The following is a 743-amino-acid chain: tRNA(Met) cytidine acetyltransferase TmcA (743 aa).

Residues glutamine 216, 241–250, and arginine 390 each bind ATP; that span reads GRGKSASIGL. One can recognise an N-acetyltransferase domain in the interval 420–604; the sequence is LKIEDVSQEE…YSVIVIRALS (185 aa). Acetyl-CoA-binding positions include 531–533 and 538–544; these read IAV and QGKGIGS.

Belongs to the RNA cytidine acetyltransferase family. TmcA subfamily.

The protein localises to the cytoplasm. It catalyses the reaction cytidine(34) in elongator tRNA(Met) + acetyl-CoA + ATP + H2O = N(4)-acetylcytidine(34) in elongator tRNA(Met) + ADP + phosphate + CoA + H(+). Functionally, catalyzes the formation of N(4)-acetylcytidine (ac(4)C) at the wobble position of tRNA(Met), by using acetyl-CoA as an acetyl donor and ATP (or GTP). In Saccharolobus islandicus (strain Y.G.57.14 / Yellowstone #1) (Sulfolobus islandicus), this protein is tRNA(Met) cytidine acetyltransferase TmcA.